A 245-amino-acid polypeptide reads, in one-letter code: 1-(5-phosphoribosyl)-5-[(5-phosphoribosylamino)methylideneamino] imidazole-4-carboxamide isomerase (245 aa).

Asp8 functions as the Proton acceptor in the catalytic mechanism. Asp130 serves as the catalytic Proton donor.

This sequence belongs to the HisA/HisF family.

The protein localises to the cytoplasm. The catalysed reaction is 1-(5-phospho-beta-D-ribosyl)-5-[(5-phospho-beta-D-ribosylamino)methylideneamino]imidazole-4-carboxamide = 5-[(5-phospho-1-deoxy-D-ribulos-1-ylimino)methylamino]-1-(5-phospho-beta-D-ribosyl)imidazole-4-carboxamide. The protein operates within amino-acid biosynthesis; L-histidine biosynthesis; L-histidine from 5-phospho-alpha-D-ribose 1-diphosphate: step 4/9. This Ectopseudomonas mendocina (strain ymp) (Pseudomonas mendocina) protein is 1-(5-phosphoribosyl)-5-[(5-phosphoribosylamino)methylideneamino] imidazole-4-carboxamide isomerase.